The primary structure comprises 297 residues: Polyamine aminopropyltransferase 2 (297 aa).

One can recognise a PABS domain in the interval 26 to 258 (FYWEPDVEGG…DLWTFFVALK (233 aa)). Gln-53 lines the S-methyl-5'-thioadenosine pocket. His-84 and Glu-108 together coordinate spermidine. S-methyl-5'-thioadenosine is bound by residues Asp-128 and 157 to 158 (DV). Residue Asp-176 is the Proton acceptor of the active site. Pro-184 contributes to the S-methyl-5'-thioadenosine binding site.

It belongs to the spermidine/spermine synthase family. As to quaternary structure, homodimer or homotetramer.

It localises to the cytoplasm. It carries out the reaction S-adenosyl 3-(methylsulfanyl)propylamine + putrescine = S-methyl-5'-thioadenosine + spermidine + H(+). Its pathway is amine and polyamine biosynthesis; spermidine biosynthesis; spermidine from putrescine: step 1/1. Catalyzes the irreversible transfer of a propylamine group from the amino donor S-adenosylmethioninamine (decarboxy-AdoMet) to putrescine (1,4-diaminobutane) to yield spermidine. The polypeptide is Polyamine aminopropyltransferase 2 (Caldanaerobacter subterraneus subsp. tengcongensis (strain DSM 15242 / JCM 11007 / NBRC 100824 / MB4) (Thermoanaerobacter tengcongensis)).